We begin with the raw amino-acid sequence, 483 residues long: Alpha-tubulin N-acetyltransferase (483 aa).

One can recognise an N-acetyltransferase domain in the interval 1 to 186 (MEFRFNMHPL…NNFVVYEGFF (186 aa)). Residues 120–133 (FYVHESRQRGGLGR) and 156–165 (SEKLLGFLQK) each bind acetyl-CoA. Disordered regions lie at residues 204 to 231 (TASPNTNLFGPTFTTTEERRRSTSQTRT), 330 to 395 (ETLP…VLGS), and 437 to 472 (SVKINRPIGKSGTRGSLHDDNESVHSNGSQQGGGGH). The span at 347–369 (YDFHPHHLELHDDTEGGGSHRDQ) shows a compositional bias: basic and acidic residues. Over residues 370–383 (SLSPQSVSQQASPV) the composition is skewed to low complexity.

It belongs to the acetyltransferase ATAT1 family.

It catalyses the reaction L-lysyl-[alpha-tubulin] + acetyl-CoA = N(6)-acetyl-L-lysyl-[alpha-tubulin] + CoA + H(+). Specifically acetylates 'Lys-40' in alpha-tubulin on the lumenal side of microtubules. Promotes microtubule destabilization and accelerates microtubule dynamics; this activity may be independent of acetylation activity. Acetylates alpha-tubulin with a slow enzymatic rate, due to a catalytic site that is not optimized for acetyl transfer. Enters the microtubule through each end and diffuses quickly throughout the lumen of microtubules. Acetylates only long/old microtubules because of its slow acetylation rate since it does not have time to act on dynamically unstable microtubules before the enzyme is released. The chain is Alpha-tubulin N-acetyltransferase from Anopheles gambiae (African malaria mosquito).